The primary structure comprises 783 residues: Galactinol--sucrose galactosyltransferase (783 aa).

This sequence belongs to the glycosyl hydrolases 36 family.

The enzyme catalyses alpha-D-galactosyl-(1-&gt;3)-1D-myo-inositol + sucrose = raffinose + myo-inositol. With respect to regulation, inhibited by Ag(2)+, Hg(2+), Zn(2+), p-chloromercuribenzoate (pCMB) and 1-deoxygalactonojirimycin. Its function is as follows. Transglycosidase operating by a ping-pong reaction mechanism. Involved in the synthesis of raffinose, a major soluble carbohydrate in seeds, roots and tubers. Specific for galactinol and p-nitrophenyl-alpha-D-galactoside as galactosyl donors. Able to utilize sucrose, lactose, 4-beta-galactobiose, N-acetyl-D-lactosamine, trehalose and lacto-N-biose as acceptors. May also act as a glycoside hydrolase. This is Galactinol--sucrose galactosyltransferase (RFS) from Oryza sativa subsp. japonica (Rice).